The primary structure comprises 269 residues: Regulatory protein RecX (269 aa).

It belongs to the RecX family.

The protein localises to the cytoplasm. Its function is as follows. Modulates RecA activity. The protein is Regulatory protein RecX of Lactococcus lactis subsp. cremoris (strain MG1363).